A 1333-amino-acid polypeptide reads, in one-letter code: Inner capsid protein VP1 (1333 aa).

Over residues 1 to 10 (MHSTTNNSNK) the composition is skewed to polar residues. Positions 1–93 (MHSTTNNSNK…MDMEKAAETT (93 aa)) are disordered. Residues 11–20 (RNNEEKHKQP) show a composition bias toward basic and acidic residues. The span at 64-82 (DGASRSGTNAKVATASSAR) shows a compositional bias: polar residues.

This sequence belongs to the turreted BTV-fold inner capsid family. In terms of assembly, homodecamer; each decamer is made up of two conformers of VP2, called VP2A and VP2B. 12 homodecamers assemble to form an icosahedral capsid.

The protein localises to the virion. Its function is as follows. Inner capsid protein that self-assembles to form an icosahedral capsid with a T=2 symmetry, which consists of 120 copies of VP2, with channels at each of its five-fold vertices. This capsid constitutes the innermost concentric layer of the viral mature particle. The chain is Inner capsid protein VP1 (S1) from Lymantria dispar cypovirus 1 (isolate Rao) (LdCPV-1).